We begin with the raw amino-acid sequence, 347 residues long: MRVTDVLKEYDLSKLTVATVASHSALQIVHGAKKEGLRTLLIVKKDRYEFYSSFSHLVDSFIIVESWKEVLNEDVVNELLASNAVLVPHGSFVEYVGAQGLLDYPVPIFGSRKILLWESDQKKKMELLRRAGIKVPREYRSPDEVDGLVIVKLGGAKGGKGYFLAKTPEEVRRGLEALGNPSNYIIQEYVIGVPAYYHFFYSPIYNRLEITGMDIRYESNVDGLRRLPPELASGIRPSFTVVGNIPVVLRESLLIDVYKYGKSFVRTTEELLGEELVGPFCLESIITEEGEVVVFEFSGRIVAGTNLYVNGSPYSYLYWDEPMSAGRRVAREIRKARDSGRLEEVLR.

Residues His-23 and Ser-91 each contribute to the 5-amino-1-(5-phospho-beta-D-ribosyl)imidazole-4-carboxamide site. In terms of domain architecture, ATP-grasp spans 112–323; sequence RKILLWESDQ…YSYLYWDEPM (212 aa). ATP is bound by residues 142 to 196 and Glu-218; that span reads PDEV…VPAY. Residue Asn-244 participates in 5-amino-1-(5-phospho-beta-D-ribosyl)imidazole-4-carboxamide binding. 2 residues coordinate Mg(2+): Glu-283 and Glu-296.

Belongs to the phosphohexose mutase family. The cofactor is Mg(2+). It depends on Mn(2+) as a cofactor.

The catalysed reaction is 5-amino-1-(5-phospho-beta-D-ribosyl)imidazole-4-carboxamide + formate + ATP = 5-formamido-1-(5-phospho-D-ribosyl)imidazole-4-carboxamide + ADP + phosphate. It functions in the pathway purine metabolism; IMP biosynthesis via de novo pathway; 5-formamido-1-(5-phospho-D-ribosyl)imidazole-4-carboxamide from 5-amino-1-(5-phospho-D-ribosyl)imidazole-4-carboxamide (formate route): step 1/1. Functionally, catalyzes the ATP- and formate-dependent formylation of 5-aminoimidazole-4-carboxamide-1-beta-d-ribofuranosyl 5'-monophosphate (AICAR) to 5-formaminoimidazole-4-carboxamide-1-beta-d-ribofuranosyl 5'-monophosphate (FAICAR) in the absence of folates. In Ignicoccus hospitalis (strain KIN4/I / DSM 18386 / JCM 14125), this protein is 5-formaminoimidazole-4-carboxamide-1-(beta)-D-ribofuranosyl 5'-monophosphate synthetase.